A 48-amino-acid polypeptide reads, in one-letter code: uncharacterized protein (48 aa).

This is an uncharacterized protein from Treponema pallidum (strain Nichols).